Here is a 741-residue protein sequence, read N- to C-terminus: Double-stranded RNA-specific editase 1 (741 aa).

A disordered region spans residues 1-79 (MDIEDEENMS…RRKTPGPVLP (79 aa)). Position 26 is a phosphoserine (Ser26). The span at 33 to 49 (PGPGEGSQLSNGGGGGP) shows a compositional bias: gly residues. Positions 63 to 73 (SKYRLKKRRKT) are enriched in basic residues. One can recognise a DRBM 1 domain in the interval 78–144 (LPKNALMQLN…AEKALRSFVQ (67 aa)). Interaction with substrate RNA stretches follow at residues 83–88 (LMQLNE) and 104–105 (VH). A Phosphoserine modification is found at Ser149. One can recognise a DRBM 2 domain in the interval 231–298 (PSGKNPVMIL…AQSALAAIFN (68 aa)). Interaction with substrate RNA regions lie at residues 237-242 (VMILNE) and His259. The 368-residue stretch at 370-737 (SVSTGTKCIN…VEKPTEQDQF (368 aa)) folds into the A to I editase domain. His394 contacts Zn(2+). Catalysis depends on Glu396, which acts as the Proton donor. 1D-myo-inositol hexakisphosphate contacts are provided by Arg400 and Arg401. Position 451 (Cys451) interacts with Zn(2+). The segment at 486–518 (RPPGLLSDPSTSTFQGAGTTEPADRHPNRKARG) is disordered. Residues 493–503 (DPSTSTFQGAG) are compositionally biased toward polar residues. Cys556 serves as a coordination point for Zn(2+). 1D-myo-inositol hexakisphosphate-binding residues include Lys559, Arg562, Lys669, Lys702, Lys712, and Lys730.

In terms of assembly, homodimer. Homodimerization is essential for its catalytic activity. Can form heterodimers with isoform 5 of ADAR/ADAR1. It depends on 1D-myo-inositol hexakisphosphate as a cofactor. Highly expressed in brain and heart and at lower levels in placenta. Fair expression in lung, liver and kidney. Detected in brain, heart, kidney, lung and liver (at protein level). As to expression, highly expressed in hippocampus and colon. Expressed in pediatric astrocytomas and the protein has a decreased RNA-editing activity. The decrease in RNA editing correlates with the grade of malignancy of the tumors, with the high grade tumors showing lower editing is seen.

It localises to the nucleus. It is found in the nucleolus. The enzyme catalyses adenosine in double-stranded RNA + H2O + H(+) = inosine in double-stranded RNA + NH4(+). Catalyzes the hydrolytic deamination of adenosine to inosine in double-stranded RNA (dsRNA) referred to as A-to-I RNA editing. This may affect gene expression and function in a number of ways that include mRNA translation by changing codons and hence the amino acid sequence of proteins; pre-mRNA splicing by altering splice site recognition sequences; RNA stability by changing sequences involved in nuclease recognition; genetic stability in the case of RNA virus genomes by changing sequences during viral RNA replication; and RNA structure-dependent activities such as microRNA production or targeting or protein-RNA interactions. Can edit both viral and cellular RNAs and can edit RNAs at multiple sites (hyper-editing) or at specific sites (site-specific editing). Its cellular RNA substrates include: bladder cancer-associated protein (BLCAP), neurotransmitter receptors for glutamate (GRIA2 and GRIK2) and serotonin (HTR2C), GABA receptor (GABRA3) and potassium voltage-gated channel (KCNA1). Site-specific RNA editing of transcripts encoding these proteins results in amino acid substitutions which consequently alter their functional activities. Edits GRIA2 at both the Q/R and R/G sites efficiently but converts the adenosine in hotspot1 much less efficiently. Can exert a proviral effect towards human immunodeficiency virus type 1 (HIV-1) and enhances its replication via both an editing-dependent and editing-independent mechanism. The former involves editing of adenosines in the 5'UTR while the latter occurs via suppression of EIF2AK2/PKR activation and function. Can inhibit cell proliferation and migration and can stimulate exocytosis. In terms of biological role, has a lower catalytic activity than isoform 2. Its function is as follows. Has a higher catalytic activity than isoform 1. In Homo sapiens (Human), this protein is Double-stranded RNA-specific editase 1.